Consider the following 203-residue polypeptide: Orotate phosphoribosyltransferase (203 aa).

Residues arginine 94, lysine 98, histidine 100, and 120 to 128 contribute to the 5-phospho-alpha-D-ribose 1-diphosphate site; that span reads EDLISTGGS. An orotate-binding site is contributed by serine 124.

The protein belongs to the purine/pyrimidine phosphoribosyltransferase family. PyrE subfamily. As to quaternary structure, homodimer. Mg(2+) serves as cofactor.

It catalyses the reaction orotidine 5'-phosphate + diphosphate = orotate + 5-phospho-alpha-D-ribose 1-diphosphate. It participates in pyrimidine metabolism; UMP biosynthesis via de novo pathway; UMP from orotate: step 1/2. Functionally, catalyzes the transfer of a ribosyl phosphate group from 5-phosphoribose 1-diphosphate to orotate, leading to the formation of orotidine monophosphate (OMP). In Staphylococcus saprophyticus subsp. saprophyticus (strain ATCC 15305 / DSM 20229 / NCIMB 8711 / NCTC 7292 / S-41), this protein is Orotate phosphoribosyltransferase.